The chain runs to 432 residues: Interleukin-11 receptor subunit alpha-2 (432 aa).

The N-terminal stretch at 1 to 23 (MSSSCSGLTRVLVAVATALVSSS) is a signal peptide. Topologically, residues 24–372 (SPCPQAWGPP…DPLEQVAVLA (349 aa)) are extracellular. Positions 27 to 110 (PQAWGPPGVQ…SGGMVTLKLG (84 aa)) constitute an Ig-like C2-type domain. Cystine bridges form between C48–C94, C120–C130, and C170–C180. 2 Fibronectin type-III domains span residues 112 to 219 (PPAR…LRPD) and 220 to 317 (PPQG…TPST). The N-linked (GlcNAc...) asparagine glycan is linked to N127. The segment at 151-170 (KTLPGAESQRESPSTGPWPC) is disordered. N-linked (GlcNAc...) asparagine glycosylation occurs at N194. The WSXWS motif signature appears at 304–308 (WSAWS). The helical transmembrane segment at 373 to 393 (SLGIFSCLGLAVGALALGLWL) threads the bilayer. Residues 394–432 (RLRRSGKEGPQKPGLLAPMIPVEKLPGIPNLQRTPENFS) lie on the Cytoplasmic side of the membrane.

Belongs to the type I cytokine receptor family. Type 3 subfamily. On ligand binding, forms a multimer complex with IL6ST/gp130. As to expression, expression restricted to testis, lymph node and thymus. Highest level in testis.

It is found in the membrane. In terms of biological role, receptor for interleukin-11. The receptor systems for IL6, LIF, OSM, CNTF, IL11 and CT1 can utilize IL6ST for initiating signal transmission. The IL11/IL11RA/IL6ST complex may be involved in the control of proliferation and/or differentiation of skeletogenic progenitor or other mesenchymal cells. The sequence is that of Interleukin-11 receptor subunit alpha-2 (Il11ra2) from Mus musculus (Mouse).